The sequence spans 352 residues: RING finger protein 39 (352 aa).

The RING-type zinc finger occupies 20–67 (CPLCGGPFEDPVLLACEHSFCRSCLARCWGSPAAPGSEEATPSCPCCG). Positions 98–118 (PGARTGRRRGGRIPTMGCLDP) are disordered. In terms of domain architecture, B30.2/SPRY spans 142 to 352 (EDLPEDYPVV…APLRIVPGEA (211 aa)).

Expressed in the hippocampus. Expression is rapidly up-regulated in granule cells of the dentate gyrus after LTP induction.

The protein resides in the cytoplasm. The catalysed reaction is S-ubiquitinyl-[E2 ubiquitin-conjugating enzyme]-L-cysteine + [acceptor protein]-L-lysine = [E2 ubiquitin-conjugating enzyme]-L-cysteine + N(6)-ubiquitinyl-[acceptor protein]-L-lysine.. It functions in the pathway protein modification; protein ubiquitination. Its function is as follows. Plays an inhibitory role in anti-RNA viral innate immunity by targeting the adapter DDX3X and promoting its 'Lys-48'-linked polyubiquitination. Alternatively, enhances the cGAS-STING pathway activation by promoting 'Lys-63'-linked ubiquitination of STING1, facilitating the STING1-TBK1 complex formation and STING1 activation. This Rattus norvegicus (Rat) protein is RING finger protein 39 (Rnf39).